Reading from the N-terminus, the 337-residue chain is tRNA N6-adenosine threonylcarbamoyltransferase (337 aa).

Positions 111 and 115 each coordinate Fe cation. Substrate-binding positions include leucine 134–glycine 138, aspartate 167, glycine 180, and asparagine 272. Aspartate 300 is a Fe cation binding site.

It belongs to the KAE1 / TsaD family. It depends on Fe(2+) as a cofactor.

The protein localises to the cytoplasm. It carries out the reaction L-threonylcarbamoyladenylate + adenosine(37) in tRNA = N(6)-L-threonylcarbamoyladenosine(37) in tRNA + AMP + H(+). Functionally, required for the formation of a threonylcarbamoyl group on adenosine at position 37 (t(6)A37) in tRNAs that read codons beginning with adenine. Is involved in the transfer of the threonylcarbamoyl moiety of threonylcarbamoyl-AMP (TC-AMP) to the N6 group of A37, together with TsaE and TsaB. TsaD likely plays a direct catalytic role in this reaction. The sequence is that of tRNA N6-adenosine threonylcarbamoyltransferase from Pseudoalteromonas translucida (strain TAC 125).